The primary structure comprises 184 residues: MNKGNLIENYAVALFNNAMVDNIQDKIFEEITSINRIITDNFDIREFLFSPIVNKNDKINAVNLLAKNIKISTIVQNFLLLLVKNSRTASLSNIVDAYNTLLYESKNIKIVQVISANKLQPKEQEWIKSLIEKELNQKTEILFDIDSTIIGGIVIKYDSMLQDYSIKGSLEKITKALKTVNVAA.

This sequence belongs to the ATPase delta chain family. F-type ATPases have 2 components, F(1) - the catalytic core - and F(0) - the membrane proton channel. F(1) has five subunits: alpha(3), beta(3), gamma(1), delta(1), epsilon(1). F(0) has three main subunits: a(1), b(2) and c(10-14). The alpha and beta chains form an alternating ring which encloses part of the gamma chain. F(1) is attached to F(0) by a central stalk formed by the gamma and epsilon chains, while a peripheral stalk is formed by the delta and b chains.

It is found in the cell inner membrane. Functionally, f(1)F(0) ATP synthase produces ATP from ADP in the presence of a proton or sodium gradient. F-type ATPases consist of two structural domains, F(1) containing the extramembraneous catalytic core and F(0) containing the membrane proton channel, linked together by a central stalk and a peripheral stalk. During catalysis, ATP synthesis in the catalytic domain of F(1) is coupled via a rotary mechanism of the central stalk subunits to proton translocation. In terms of biological role, this protein is part of the stalk that links CF(0) to CF(1). It either transmits conformational changes from CF(0) to CF(1) or is implicated in proton conduction. In Rickettsia massiliae (strain Mtu5), this protein is ATP synthase subunit delta.